A 414-amino-acid chain; its full sequence is Tryptophan synthase beta chain (414 aa).

A disordered region spans residues 1-28 (MVSTISRQDQNNNDDLNQPSKEGRFGKY). Residues 8-18 (QDQNNNDDLNQ) show a composition bias toward low complexity. Lysine 108 carries the post-translational modification N6-(pyridoxal phosphate)lysine.

It belongs to the TrpB family. In terms of assembly, tetramer of two alpha and two beta chains. The cofactor is pyridoxal 5'-phosphate.

The catalysed reaction is (1S,2R)-1-C-(indol-3-yl)glycerol 3-phosphate + L-serine = D-glyceraldehyde 3-phosphate + L-tryptophan + H2O. It functions in the pathway amino-acid biosynthesis; L-tryptophan biosynthesis; L-tryptophan from chorismate: step 5/5. Functionally, the beta subunit is responsible for the synthesis of L-tryptophan from indole and L-serine. This chain is Tryptophan synthase beta chain, found in Prochlorococcus marinus subsp. pastoris (strain CCMP1986 / NIES-2087 / MED4).